We begin with the raw amino-acid sequence, 287 residues long: Eukaryotic translation initiation factor 3 subunit F (287 aa).

The MPN domain occupies 12–142; that stretch reads VRVHPVVLFQ…IKAYVCVSLG (131 aa).

This sequence belongs to the eIF-3 subunit F family. In terms of assembly, component of the eukaryotic translation initiation factor 3 (eIF-3) complex.

It is found in the cytoplasm. Its function is as follows. Component of the eukaryotic translation initiation factor 3 (eIF-3) complex, which is involved in protein synthesis of a specialized repertoire of mRNAs and, together with other initiation factors, stimulates binding of mRNA and methionyl-tRNAi to the 40S ribosome. The eIF-3 complex specifically targets and initiates translation of a subset of mRNAs involved in cell proliferation. The sequence is that of Eukaryotic translation initiation factor 3 subunit F from Anopheles gambiae (African malaria mosquito).